The primary structure comprises 431 residues: Serine hydroxymethyltransferase 2 (431 aa).

(6S)-5,6,7,8-tetrahydrofolate contacts are provided by residues L131 and 135 to 137; that span reads GHL. K240 carries the post-translational modification N6-(pyridoxal phosphate)lysine.

This sequence belongs to the SHMT family. Homodimer. The cofactor is pyridoxal 5'-phosphate.

It localises to the cytoplasm. It catalyses the reaction (6R)-5,10-methylene-5,6,7,8-tetrahydrofolate + glycine + H2O = (6S)-5,6,7,8-tetrahydrofolate + L-serine. It functions in the pathway one-carbon metabolism; tetrahydrofolate interconversion. It participates in amino-acid biosynthesis; glycine biosynthesis; glycine from L-serine: step 1/1. Functionally, catalyzes the reversible interconversion of serine and glycine with tetrahydrofolate (THF) serving as the one-carbon carrier. This reaction serves as the major source of one-carbon groups required for the biosynthesis of purines, thymidylate, methionine, and other important biomolecules. Also exhibits THF-independent aldolase activity toward beta-hydroxyamino acids, producing glycine and aldehydes, via a retro-aldol mechanism. The sequence is that of Serine hydroxymethyltransferase 2 from Photobacterium profundum (strain SS9).